A 222-amino-acid chain; its full sequence is Eukaryotic translation initiation factor 3 subunit K (222 aa).

The PCI domain occupies Y46 to K208.

This sequence belongs to the eIF-3 subunit K family. As to quaternary structure, component of the eukaryotic translation initiation factor 3 (eIF-3) complex. The eIF-3 complex interacts with pix.

The protein localises to the cytoplasm. Its function is as follows. Component of the eukaryotic translation initiation factor 3 (eIF-3) complex, which is involved in protein synthesis of a specialized repertoire of mRNAs and, together with other initiation factors, stimulates binding of mRNA and methionyl-tRNAi to the 40S ribosome. The eIF-3 complex specifically targets and initiates translation of a subset of mRNAs involved in cell proliferation. In Drosophila willistoni (Fruit fly), this protein is Eukaryotic translation initiation factor 3 subunit K.